The primary structure comprises 126 residues: SOSS complex subunit C homolog (126 aa).

The segment at 106–126 (LEPLPSPATTPTAPPSHSISK) is disordered. Residues 107–119 (EPLPSPATTPTAP) are compositionally biased toward pro residues.

Belongs to the SOSS-C family.

This is SOSS complex subunit C homolog from Drosophila sechellia (Fruit fly).